The chain runs to 582 residues: SUMO-activating enzyme subunit uba-2 (582 aa).

Residues 20–25 (GAGGIG), Asp-44, 52–55 (NLNR), Lys-68, 91–92 (SI), and 113–118 (DNRAAR) each bind ATP. Residues Cys-154 and Cys-157 each coordinate Zn(2+). Residue Cys-170 is the Glycyl thioester intermediate of the active site. The span at 204-214 (SPDMDAVDPDN) shows a compositional bias: acidic residues. The segment at 204-235 (SPDMDAVDPDNTEAVTTEKEKEAMKEEPAPVG) is disordered. Positions 219 to 231 (TTEKEKEAMKEEP) are enriched in basic and acidic residues. 2 residues coordinate Zn(2+): Cys-431 and Cys-434. The span at 531-570 (FEVARSEKEPEPDDRKRKADGSEEPEAKRQKVEEKDDKNG) shows a compositional bias: basic and acidic residues. The segment at 531–582 (FEVARSEKEPEPDDRKRKADGSEEPEAKRQKVEEKDDKNGNEAVAEITETMA) is disordered.

It belongs to the ubiquitin-activating E1 family. In terms of assembly, heterodimer with aos-1.

It functions in the pathway protein modification; protein sumoylation. The dimeric enzyme acts as an E1 ligase for smo-1. It mediates ATP-dependent activation of smo-1 and formation of a thioester with a conserved cysteine residue on uba-2. This is SUMO-activating enzyme subunit uba-2 (uba-2) from Caenorhabditis elegans.